The chain runs to 1034 residues: Ice nucleation protein InaU (1034 aa).

The interval 162–993 (ATYGSTLSGT…LTAGENSVLI (832 aa)) is octapeptide periodicity. Disordered regions lie at residues 260–287 (YGST…KGSD), 311–342 (TQTA…GYGS), 356–383 (YGST…KGSD), 407–438 (TQTA…GYGS), 452–480 (YGST…GSDL), and 570–597 (AREG…TGYG). Polar residues-rich tracts occupy residues 261 to 286 (GSTQ…QKGS), 311 to 334 (TQTA…QKGS), 357 to 382 (GSTQ…QKGS), 407 to 430 (TQTA…QKGS), 453 to 480 (GSTQ…GSDL), and 580 to 592 (YGST…NSDL).

It belongs to the bacterial ice nucleation protein family.

The protein resides in the cell outer membrane. Functionally, ice nucleation proteins enable bacteria to nucleate crystallization in supercooled water. The polypeptide is Ice nucleation protein InaU (inaU) (Pantoea ananas (Erwinia uredovora)).